Consider the following 142-residue polypeptide: Probable inactive dual specificity protein phosphatase-like At4g18593 (142 aa).

The protein belongs to the protein-tyrosine phosphatase family. Non-receptor class dual specificity subfamily.

This chain is Probable inactive dual specificity protein phosphatase-like At4g18593, found in Arabidopsis thaliana (Mouse-ear cress).